The following is a 755-amino-acid chain: Xaa-Pro dipeptidyl-peptidase (755 aa).

Residues serine 348, aspartate 468, and histidine 498 each act as charge relay system in the active site.

The protein belongs to the peptidase S15 family. As to quaternary structure, homodimer.

The protein resides in the cytoplasm. The catalysed reaction is Hydrolyzes Xaa-Pro-|- bonds to release unblocked, N-terminal dipeptides from substrates including Ala-Pro-|-p-nitroanilide and (sequentially) Tyr-Pro-|-Phe-Pro-|-Gly-Pro-|-Ile.. In terms of biological role, removes N-terminal dipeptides sequentially from polypeptides having unsubstituted N-termini provided that the penultimate residue is proline. This chain is Xaa-Pro dipeptidyl-peptidase, found in Streptococcus thermophilus (strain ATCC BAA-491 / LMD-9).